Here is an 80-residue protein sequence, read N- to C-terminus: Defensin-like protein 14 (80 aa).

The signal sequence occupies residues 1–29 (MAKSAAIITFLFAALVLFAAFEAPIMVEA). Glutamine 30 is modified (pyrrolidone carboxylic acid). 4 disulfides stabilise this stretch: cysteine 33/cysteine 80, cysteine 44/cysteine 65, cysteine 50/cysteine 74, and cysteine 54/cysteine 76.

This sequence belongs to the DEFL family.

The protein localises to the secreted. Functionally, confers broad-spectrum resistance to pathogens. Has antifungal activity in vitro. This is Defensin-like protein 14 (PDF1.3) from Arabidopsis thaliana (Mouse-ear cress).